A 1403-amino-acid polypeptide reads, in one-letter code: Eukaryotic translation initiation factor 4 gamma (1403 aa).

Polar residues-rich tracts occupy residues 1-11 (MSSKPPSNTPK), 19-39 (ASSQ…TATA), and 50-60 (EPTNTSRANAQ). 4 disordered regions span residues 1 to 381 (MSSK…GSTP), 439 to 464 (SRSG…RNGF), 488 to 774 (VVVP…KRDL), and 861 to 1003 (AFSD…EALL). A Phosphoserine modification is found at serine 83. Residues 109–137 (DNTSKPSANSSAERTSSQHQKPETSSQIG) show a composition bias toward polar residues. Low complexity-rich tracts occupy residues 190 to 208 (SGVS…SVTS) and 231 to 248 (PRPT…ANGA). Over residues 249–269 (PTNKPSTDINTTDPATQTTQV) the composition is skewed to polar residues. A compositionally biased stretch (low complexity) spans 270–291 (SASNSPALSGSSTPSNTSSRSN). Basic and acidic residues predominate over residues 298-308 (FSEKRHYDRYG). Residues 325–334 (NYNNSGNNRN) are compositionally biased toward low complexity. Polar residues-rich tracts occupy residues 346-381 (RNYN…GSTP), 439-460 (SRSG…TLSP), and 493-508 (KNAS…SRAE). Phosphoserine is present on residues serine 452, serine 455, serine 456, and serine 459. Residues 537–714 (IQEKAEAEAK…GKREADKNPE (178 aa)) show a composition bias toward basic and acidic residues. A compositionally biased stretch (polar residues) spans 720 to 737 (PLASSEANVDTSKQTNAT). The span at 741 to 754 (VVDKTKVEKLKASE) shows a compositional bias: basic and acidic residues. The span at 757–768 (STSSLSSPSHST) shows a compositional bias: low complexity. Phosphoserine is present on residues serine 866 and serine 882. The segment covering 868–886 (RGMYSSSRQSSRSGSNTHS) has biased composition (low complexity). Threonine 884 carries the post-translational modification Phosphothreonine. Serine 886, serine 911, serine 919, and serine 921 each carry phosphoserine. Tyrosine 923 carries the post-translational modification Phosphotyrosine. Over residues 986–995 (KLTEKPAETK) the composition is skewed to basic and acidic residues. The MIF4G domain occupies 1009–1245 (QRKVKGSLNK…MDVMDSRKNG (237 aa)). Positions 1266–1403 (AERKKALAES…QKDSNSKTSS (138 aa)) are disordered. A compositionally biased stretch (basic and acidic residues) spans 1284 to 1295 (HGRDMNRGDSRM). 3 stretches are compositionally biased toward polar residues: residues 1302-1313 (PPFSSSDWSNNK), 1328-1341 (SGTQ…SLSS), and 1348-1358 (VSRTPSRQNSA). Serine 1333 is subject to Phosphoserine. Over residues 1383 to 1403 (LEEHDHDNDGGQKDSNSKTSS) the composition is skewed to basic and acidic residues.

This sequence belongs to the eukaryotic initiation factor 4G family.

Its subcellular location is the cytoplasm. The protein resides in the perinuclear region. Component of the protein complex eIF4F, which is involved in the recognition of the mRNA cap, ATP-dependent unwinding of 5'-terminal secondary structure and recruitment of mRNA to the ribosome. The protein is Eukaryotic translation initiation factor 4 gamma (tif471) of Schizosaccharomyces pombe (strain 972 / ATCC 24843) (Fission yeast).